Here is a 91-residue protein sequence, read N- to C-terminus: PqqA binding protein (91 aa).

The protein belongs to the PqqD family. As to quaternary structure, monomer. Interacts with PqqE.

The protein operates within cofactor biosynthesis; pyrroloquinoline quinone biosynthesis. In terms of biological role, functions as a PqqA binding protein and presents PqqA to PqqE, in the pyrroloquinoline quinone (PQQ) biosynthetic pathway. The sequence is that of PqqA binding protein from Pseudomonas fluorescens (strain SBW25).